We begin with the raw amino-acid sequence, 370 residues long: Phosphate acyltransferase (370 aa).

Belongs to the PlsX family. Homodimer. Probably interacts with PlsY.

The protein resides in the cytoplasm. The catalysed reaction is a fatty acyl-[ACP] + phosphate = an acyl phosphate + holo-[ACP]. The protein operates within lipid metabolism; phospholipid metabolism. Functionally, catalyzes the reversible formation of acyl-phosphate (acyl-PO(4)) from acyl-[acyl-carrier-protein] (acyl-ACP). This enzyme utilizes acyl-ACP as fatty acyl donor, but not acyl-CoA. The sequence is that of Phosphate acyltransferase from Polaromonas naphthalenivorans (strain CJ2).